We begin with the raw amino-acid sequence, 506 residues long: Glutamate--tRNA ligase (506 aa).

The 'HIGH' region signature appears at 12 to 22; that stretch reads PSPTGDPHVGT. Residues 253–257 carry the 'KMSKS' region motif; that stretch reads KLSKR. Residue K256 participates in ATP binding.

It belongs to the class-I aminoacyl-tRNA synthetase family. Glutamate--tRNA ligase type 1 subfamily. In terms of assembly, monomer.

The protein localises to the cytoplasm. It carries out the reaction tRNA(Glu) + L-glutamate + ATP = L-glutamyl-tRNA(Glu) + AMP + diphosphate. Catalyzes the attachment of glutamate to tRNA(Glu) in a two-step reaction: glutamate is first activated by ATP to form Glu-AMP and then transferred to the acceptor end of tRNA(Glu). This chain is Glutamate--tRNA ligase, found in Chlamydia trachomatis serovar A (strain ATCC VR-571B / DSM 19440 / HAR-13).